A 91-amino-acid chain; its full sequence is MSMDEGRLYKIIIRPVHSEKALNLIDKENTLTFIVDRNASKKDIKDAVELVFGVKVLKVRTLITSRGEKKAYVKLAPEHRASEIASQLGLI.

Belongs to the universal ribosomal protein uL23 family. As to quaternary structure, part of the 50S ribosomal subunit. Contacts protein L29.

In terms of biological role, binds to 23S rRNA. One of the proteins that surrounds the polypeptide exit tunnel on the outside of the ribosome. The polypeptide is Large ribosomal subunit protein uL23 (Staphylothermus marinus (strain ATCC 43588 / DSM 3639 / JCM 9404 / F1)).